Reading from the N-terminus, the 596-residue chain is uncharacterized protein (596 aa).

Residues 7–26 (FWPILLGFTVLVAAGLYYVV) form a helical membrane-spanning segment.

The protein localises to the membrane. This is an uncharacterized protein from Sinorhizobium fredii (strain NBRC 101917 / NGR234).